Here is a 188-residue protein sequence, read N- to C-terminus: Elongation factor P (188 aa).

At Lys34 the chain carries N6-(3,6-diaminohexanoyl)-5-hydroxylysine.

It belongs to the elongation factor P family. Post-translationally, may be beta-lysylated on the epsilon-amino group of Lys-34 by the combined action of EpmA and EpmB, and then hydroxylated on the C5 position of the same residue by EpmC (if this protein is present). Lysylation is critical for the stimulatory effect of EF-P on peptide-bond formation. The lysylation moiety may extend toward the peptidyltransferase center and stabilize the terminal 3-CCA end of the tRNA. Hydroxylation of the C5 position on Lys-34 may allow additional potential stabilizing hydrogen-bond interactions with the P-tRNA.

It is found in the cytoplasm. It functions in the pathway protein biosynthesis; polypeptide chain elongation. Functionally, involved in peptide bond synthesis. Alleviates ribosome stalling that occurs when 3 or more consecutive Pro residues or the sequence PPG is present in a protein, possibly by augmenting the peptidyl transferase activity of the ribosome. Modification of Lys-34 is required for alleviation. The chain is Elongation factor P from Methylococcus capsulatus (strain ATCC 33009 / NCIMB 11132 / Bath).